The sequence spans 129 residues: UPF0047 protein Mb2586c (129 aa).

The protein belongs to the UPF0047 family.

The protein is UPF0047 protein Mb2586c of Mycobacterium bovis (strain ATCC BAA-935 / AF2122/97).